The chain runs to 338 residues: Ketol-acid reductoisomerase (NADP(+)) (338 aa).

The KARI N-terminal Rossmann domain maps to 1-181 (MNVYYDRDCD…GGGRTGIIET (181 aa)). NADP(+) contacts are provided by residues 24–27 (YGSQ), R47, S50, S52, and 82–85 (DEFQ). The active site involves H107. G133 is a binding site for NADP(+). The KARI C-terminal knotted domain occupies 182-327 (TFKDETETDL…GNLRAMMPWI (146 aa)). Mg(2+) is bound by residues D190, E194, E226, and E230. Substrate is bound at residue S251.

It belongs to the ketol-acid reductoisomerase family. Mg(2+) is required as a cofactor.

It carries out the reaction (2R)-2,3-dihydroxy-3-methylbutanoate + NADP(+) = (2S)-2-acetolactate + NADPH + H(+). The catalysed reaction is (2R,3R)-2,3-dihydroxy-3-methylpentanoate + NADP(+) = (S)-2-ethyl-2-hydroxy-3-oxobutanoate + NADPH + H(+). It participates in amino-acid biosynthesis; L-isoleucine biosynthesis; L-isoleucine from 2-oxobutanoate: step 2/4. The protein operates within amino-acid biosynthesis; L-valine biosynthesis; L-valine from pyruvate: step 2/4. In terms of biological role, involved in the biosynthesis of branched-chain amino acids (BCAA). Catalyzes an alkyl-migration followed by a ketol-acid reduction of (S)-2-acetolactate (S2AL) to yield (R)-2,3-dihydroxy-isovalerate. In the isomerase reaction, S2AL is rearranged via a Mg-dependent methyl migration to produce 3-hydroxy-3-methyl-2-ketobutyrate (HMKB). In the reductase reaction, this 2-ketoacid undergoes a metal-dependent reduction by NADPH to yield (R)-2,3-dihydroxy-isovalerate. This chain is Ketol-acid reductoisomerase (NADP(+)), found in Trichlorobacter lovleyi (strain ATCC BAA-1151 / DSM 17278 / SZ) (Geobacter lovleyi).